Reading from the N-terminus, the 83-residue chain is Protein ShK-like4 (83 aa).

The N-terminal stretch at methionine 1–alanine 21 is a signal peptide. The propeptide occupies leucine 22–arginine 48. 3 cysteine pairs are disulfide-bonded: cysteine 50–cysteine 82, cysteine 57–cysteine 75, and cysteine 67–cysteine 79. A ShKT domain is found at cysteine 50–glutamate 83.

Post-translationally, contains 3 disulfide bonds. As to expression, expressed in various neurons (ectodermal sensory cells) (in planulae and primary polyps). Not expressed in nematocytes.

Probable neuropeptide. This is Protein ShK-like4 from Nematostella vectensis (Starlet sea anemone).